Consider the following 511-residue polypeptide: ATP synthase subunit alpha (511 aa).

ATP is bound at residue 169 to 176 (GDRQTGKT).

This sequence belongs to the ATPase alpha/beta chains family. F-type ATPases have 2 components, CF(1) - the catalytic core - and CF(0) - the membrane proton channel. CF(1) has five subunits: alpha(3), beta(3), gamma(1), delta(1), epsilon(1). CF(0) has three main subunits: a(1), b(2) and c(9-12). The alpha and beta chains form an alternating ring which encloses part of the gamma chain. CF(1) is attached to CF(0) by a central stalk formed by the gamma and epsilon chains, while a peripheral stalk is formed by the delta and b chains.

The protein resides in the cell inner membrane. The enzyme catalyses ATP + H2O + 4 H(+)(in) = ADP + phosphate + 5 H(+)(out). Functionally, produces ATP from ADP in the presence of a proton gradient across the membrane. The alpha chain is a regulatory subunit. The sequence is that of ATP synthase subunit alpha from Bartonella bacilliformis (strain ATCC 35685 / KC583 / Herrer 020/F12,63).